We begin with the raw amino-acid sequence, 443 residues long: Putative transporter AmpG 1 (443 aa).

Helical transmembrane passes span 6–26, 43–63, 74–96, 106–128, 144–164, 172–192, 255–275, 300–320, 326–346, 355–375, 394–414, and 416–436; these read HVCI…MITG, IGIL…APVF, ILGH…TSIL, VLLS…ILSA, GIYI…AIYL, KIYQ…ILVS, DISL…YRLP, VCKF…GIIM, LYSI…FILL, ILFI…TAYI, LSSM…YMVV, and FGWQ…LLIL.

It belongs to the major facilitator superfamily.

The protein localises to the cell inner membrane. This Rickettsia typhi (strain ATCC VR-144 / Wilmington) protein is Putative transporter AmpG 1 (ampG1).